The following is a 223-amino-acid chain: DNA mismatch repair protein MutH (223 aa).

This sequence belongs to the MutH family.

It localises to the cytoplasm. Functionally, sequence-specific endonuclease that cleaves unmethylated GATC sequences. It is involved in DNA mismatch repair. This is DNA mismatch repair protein MutH from Shewanella sp. (strain ANA-3).